Consider the following 296-residue polypeptide: 4-diphosphocytidyl-2-C-methyl-D-erythritol kinase (296 aa).

The active site involves lysine 13. 98–108 serves as a coordination point for ATP; the sequence is PVAAGIGGGSA. Aspartate 140 is a catalytic residue.

It belongs to the GHMP kinase family. IspE subfamily.

It catalyses the reaction 4-CDP-2-C-methyl-D-erythritol + ATP = 4-CDP-2-C-methyl-D-erythritol 2-phosphate + ADP + H(+). Its pathway is isoprenoid biosynthesis; isopentenyl diphosphate biosynthesis via DXP pathway; isopentenyl diphosphate from 1-deoxy-D-xylulose 5-phosphate: step 3/6. Catalyzes the phosphorylation of the position 2 hydroxy group of 4-diphosphocytidyl-2C-methyl-D-erythritol. This chain is 4-diphosphocytidyl-2-C-methyl-D-erythritol kinase, found in Rhodopseudomonas palustris (strain HaA2).